The following is a 476-amino-acid chain: GTPase Der (476 aa).

EngA-type G domains follow at residues 3–167 (FTVA…GEDM) and 205–380 (LRVA…KTWN). GTP contacts are provided by residues 9–16 (GRPNVGKS), 56–60 (DTAGL), 119–122 (NKSE), 211–218 (GRPNAGKS), 258–262 (DTAGM), and 323–326 (NKWD). The region spanning 381–465 (RRISTAKLNR…PIRVHYRGSD (85 aa)) is the KH-like domain.

It belongs to the TRAFAC class TrmE-Era-EngA-EngB-Septin-like GTPase superfamily. EngA (Der) GTPase family. Associates with the 50S ribosomal subunit.

Functionally, GTPase that plays an essential role in the late steps of ribosome biogenesis. The sequence is that of GTPase Der from Agrobacterium fabrum (strain C58 / ATCC 33970) (Agrobacterium tumefaciens (strain C58)).